The chain runs to 29 residues: Sarcolamban B (29 aa).

A helical membrane pass occupies residues 7–27 (LFTTFLILAFLLFLLYAFYEA).

As to quaternary structure, interacts with SERCA. In terms of tissue distribution, strongly expressed in embryonic and larval somatic muscles and postembryonic heart.

The protein resides in the sarcoplasmic reticulum membrane. In terms of biological role, plays an essential role in the regulation of calcium transport at the sarcoplasmic reticulum (SR), which is secondarily required for regular muscle contraction. This is Sarcolamban B from Drosophila melanogaster (Fruit fly).